Here is a 202-residue protein sequence, read N- to C-terminus: Imidazoleglycerol-phosphate dehydratase (202 aa).

It belongs to the imidazoleglycerol-phosphate dehydratase family.

It localises to the cytoplasm. It catalyses the reaction D-erythro-1-(imidazol-4-yl)glycerol 3-phosphate = 3-(imidazol-4-yl)-2-oxopropyl phosphate + H2O. Its pathway is amino-acid biosynthesis; L-histidine biosynthesis; L-histidine from 5-phospho-alpha-D-ribose 1-diphosphate: step 6/9. The protein is Imidazoleglycerol-phosphate dehydratase of Brucella abortus (strain S19).